The primary structure comprises 622 residues: Fanconi anemia group G protein (622 aa).

Position 7 is a phosphoserine (Ser7). 4 TPR repeats span residues 246–279 (VQVY…GSAW), 344–377 (SQTK…LLDS), 453–486 (SATH…LFRA), and 514–547 (AAAL…CPGN).

As to quaternary structure, belongs to the multisubunit FA complex composed of FANCA, FANCB, FANCC, FANCE, FANCF, FANCG, FANCL/PHF9 and FANCM. The complex is not found in FA patients. In complex with FANCF, FANCA and FANCL, but not with FANCC, nor FANCE, interacts with HES1; this interaction may be essential for the stability and nuclear localization of FA core complex proteins. The complex with FANCC and FANCG may also include EIF2AK2 and HSP70. When phosphorylated at Ser-7, forms a complex with BRCA2, FANCD2 and XRCC3. In terms of tissue distribution, highly expressed in testis and thymus. Found in lymphoblasts.

It is found in the nucleus. It localises to the cytoplasm. Its function is as follows. DNA repair protein that may operate in a postreplication repair or a cell cycle checkpoint function. May be implicated in interstrand DNA cross-link repair and in the maintenance of normal chromosome stability. Candidate tumor suppressor gene. The sequence is that of Fanconi anemia group G protein (FANCG) from Homo sapiens (Human).